Consider the following 681-residue polypeptide: Auxin response factor 8 (681 aa).

Positions 120-222 (FAKTLTQSDA…DLHVGIRRAK (103 aa)) form a DNA-binding region, TF-B3. 2 disordered regions span residues 474 to 518 (LRRP…AKPP) and 534 to 577 (SLSG…TSSE). 2 stretches are compositionally biased toward polar residues: residues 534–555 (SLSG…NTEK) and 564–577 (GVIQ…TSSE). Residues 595-675 (PGQCKVFIES…RRLTILTDAG (81 aa)) enclose the PB1 domain.

The protein belongs to the ARF family. Homodimers and heterodimers. In terms of tissue distribution, expressed in roots, culms, leaves and young panicles.

The protein localises to the nucleus. Auxin response factors (ARFs) are transcriptional factors that bind specifically to the DNA sequence 5'-TGTCTC-3' found in the auxin-responsive promoter elements (AuxREs). In Oryza sativa subsp. japonica (Rice), this protein is Auxin response factor 8 (ARF8).